Reading from the N-terminus, the 354-residue chain is NADH-quinone oxidoreductase subunit H (354 aa).

Helical transmembrane passes span 25 to 45 (LVRI…LILW), 91 to 111 (WIYL…WAVI), 126 to 146 (LLYA…AGWA), 170 to 190 (MGFA…SGIV), 205 to 225 (FLSW…ISGI), 267 to 287 (IVIS…PFGF), 290 to 310 (FVPG…VFIW), and 330 to 350 (IFIP…MSPL).

It belongs to the complex I subunit 1 family. NDH-1 is composed of 14 different subunits. Subunits NuoA, H, J, K, L, M, N constitute the membrane sector of the complex.

It is found in the cell inner membrane. The catalysed reaction is a quinone + NADH + 5 H(+)(in) = a quinol + NAD(+) + 4 H(+)(out). Functionally, NDH-1 shuttles electrons from NADH, via FMN and iron-sulfur (Fe-S) centers, to quinones in the respiratory chain. The immediate electron acceptor for the enzyme in this species is believed to be ubiquinone. Couples the redox reaction to proton translocation (for every two electrons transferred, four hydrogen ions are translocated across the cytoplasmic membrane), and thus conserves the redox energy in a proton gradient. This subunit may bind ubiquinone. The protein is NADH-quinone oxidoreductase subunit H of Paraburkholderia phytofirmans (strain DSM 17436 / LMG 22146 / PsJN) (Burkholderia phytofirmans).